Reading from the N-terminus, the 508-residue chain is Photosystem II CP47 reaction center protein (508 aa).

The next 6 helical transmembrane spans lie at 21-36 (SVHIMHTALVSGWAGS), 101-115 (IVFSGLCFLAAIWHW), 140-156 (GIHLFLSGVACFGFGAF), 203-218 (IAAGTLGILAGLFHLS), 237-252 (VLSSSIAAVFFAAFVV), and 457-472 (SFALLFFFGHIWHGAR).

Belongs to the PsbB/PsbC family. PsbB subfamily. PSII is composed of 1 copy each of membrane proteins PsbA, PsbB, PsbC, PsbD, PsbE, PsbF, PsbH, PsbI, PsbJ, PsbK, PsbL, PsbM, PsbT, PsbX, PsbY, PsbZ, Psb30/Ycf12, at least 3 peripheral proteins of the oxygen-evolving complex and a large number of cofactors. It forms dimeric complexes. Binds multiple chlorophylls. PSII binds additional chlorophylls, carotenoids and specific lipids. serves as cofactor.

The protein resides in the plastid. The protein localises to the chloroplast thylakoid membrane. Functionally, one of the components of the core complex of photosystem II (PSII). It binds chlorophyll and helps catalyze the primary light-induced photochemical processes of PSII. PSII is a light-driven water:plastoquinone oxidoreductase, using light energy to abstract electrons from H(2)O, generating O(2) and a proton gradient subsequently used for ATP formation. The protein is Photosystem II CP47 reaction center protein of Nymphaea alba (White water-lily).